Here is a 148-residue protein sequence, read N- to C-terminus: Lysozyme C (148 aa).

Positions 1–18 (MKALTILGLVLLSVTVQG) are cleaved as a signal peptide. The C-type lysozyme domain maps to 19 to 148 (KIFERCELAR…VSQYVKGCGV (130 aa)). 4 disulfides stabilise this stretch: C24/C146, C48/C134, C83/C99, and C95/C113. Catalysis depends on residues E53 and D71.

The protein belongs to the glycosyl hydrolase 22 family. In terms of assembly, monomer.

It localises to the secreted. The enzyme catalyses Hydrolysis of (1-&gt;4)-beta-linkages between N-acetylmuramic acid and N-acetyl-D-glucosamine residues in a peptidoglycan and between N-acetyl-D-glucosamine residues in chitodextrins.. In terms of biological role, lysozymes have primarily a bacteriolytic function; those in tissues and body fluids are associated with the monocyte-macrophage system and enhance the activity of immunoagents. Also plays a role in digestion in this species. The protein is Lysozyme C (LYZ) of Semnopithecus entellus (Northern plains gray langur).